Here is a 428-residue protein sequence, read N- to C-terminus: UPF0597 protein BF3560 (428 aa).

Belongs to the UPF0597 family.

This is UPF0597 protein BF3560 from Bacteroides fragilis (strain ATCC 25285 / DSM 2151 / CCUG 4856 / JCM 11019 / LMG 10263 / NCTC 9343 / Onslow / VPI 2553 / EN-2).